The chain runs to 106 residues: Prothymosin alpha-B (106 aa).

The segment covering 1 to 39 has biased composition (basic and acidic residues); it reads MADAKVDSATEISAKDLKEKKLIEEKENGKDATNGKENE. A disordered region spans residues 1 to 106; the sequence is MADAKVDSAT…DVDPKKQKVN (106 aa). Residue S8 is modified to Phosphoserine. T10 carries the phosphothreonine modification. Acidic residues-rich tracts occupy residues 40-76 and 85-98; these read ENGE…DEDL and DDDE…EDDV.

Belongs to the pro/parathymosin family. In terms of tissue distribution, uniformly expressed in all embryonic cells at 4 and 8 hpf. At the 20-somite stage (18 hpf), ubiquitously expressed in the developing nervous system, in the tail bud and in the pronephric ducts. Also expressed in some placodes, including the anterior lateral line placode, otic vesicle and olfactory placode. At 27 hpf, strong expression persists in the central nervous system and the olfactory placode. Expressed strongly in the eyes and the pectoral fin buds. In the tail region, expressed in the spinal cord, in the posterior lateral line precursors, and persists in the pronephric ducts. At 48 hpf, expressed in all head territories including the developing brain, eyes, and pharyngeal arches. More caudally, expression persists in the pectoral fin buds, the spinal cord and, for the first time, appears in the intestine. At 72 hpf, expressed only in restricted regions of the brain, in pharyngeal arches region and in the amacrine cells and the horizontal cells of the retina.

The protein localises to the nucleus. The chain is Prothymosin alpha-B from Danio rerio (Zebrafish).